The chain runs to 721 residues: Polyribonucleotide nucleotidyltransferase (721 aa).

Mg(2+)-binding residues include Asp-486 and Asp-492. Residues 553–612 (PKIVQLQIDIDKISLVIGSTGKTVKAITDEFEVKVQIEQNGKIILFGDDDFKMQKAKERI) form the KH domain. The 95-residue stretch at 622-716 (GEIYEGIVKK…KFGKIDLEVV (95 aa)) folds into the S1 motif domain.

Belongs to the polyribonucleotide nucleotidyltransferase family. Requires Mg(2+) as cofactor.

The protein localises to the cytoplasm. The catalysed reaction is RNA(n+1) + phosphate = RNA(n) + a ribonucleoside 5'-diphosphate. Functionally, involved in mRNA degradation. Catalyzes the phosphorolysis of single-stranded polyribonucleotides processively in the 3'- to 5'-direction. This Borrelia garinii subsp. bavariensis (strain ATCC BAA-2496 / DSM 23469 / PBi) (Borreliella bavariensis) protein is Polyribonucleotide nucleotidyltransferase.